The chain runs to 1465 residues: Gag-Pol polyprotein (1465 aa).

Gly2 is lipidated: N-myristoyl glycine; by host. The interval 7-31 (VLSGKKTDELEKVRLRPGGKKKYML) is interaction with Gp41. A Nuclear export signal motif is present at residues 16–22 (LEKVRLR). A Nuclear localization signal motif is present at residues 26–32 (KKKYMLK). Positions 105–114 (QRHLAADTEK) are enriched in basic and acidic residues. A disordered region spans residues 105-129 (QRHLAADTEKMPATNKPTAPPSGGN). Tyr130 carries the phosphotyrosine; by host modification. The interaction with human PPIA/CYPA and NUP153 stretch occupies residues 186–223 (NCVGEHQAAMQIIREIINEEAADWDQQHPSPGPMPAGQ). The segment at 274–360 (YNPTNILDIK…GGPGQKARLM (87 aa)) is dimerization/Multimerization of capsid protein p24. 2 consecutive CCHC-type zinc fingers follow at residues 388–405 (VTCWNCGKQGHTARQCRA) and 409–426 (QGCWKCGKTGHIMSKCPE). The segment at 441 to 508 (ASQLPHDPSA…PRETLQGGDR (68 aa)) is disordered. Residues 484 to 501 (DAEKLHADGETTEREPRE) are compositionally biased toward basic and acidic residues. The tract at residues 513 to 517 (PQFSL) is dimerization of protease. The region spanning 532-601 (VEVLLDTGVD…TPINIFGRNI (70 aa)) is the Peptidase A2 domain. The For protease activity; shared with dimeric partner role is filled by Asp537. Dimerization of protease regions lie at residues 561 to 567 (GIGGFIN) and 600 to 612 (NILNTLGMTLNFP). The region spanning 655–844 (EGQLEEAPPT…PPFKWMGYEL (190 aa)) is the Reverse transcriptase domain. Residues Asp720, Asp795, and Asp796 each contribute to the Mg(2+) site. The RT 'primer grip' stretch occupies residues 837–845 (FKWMGYELW). The Tryptophan repeat motif motif lies at 1007 to 1023 (WDQWWTDYWQVTWIPEW). The region spanning 1043–1166 (LEGRETYYTD…VDHLVSQGIR (124 aa)) is the RNase H type-1 domain. Mg(2+) is bound by residues Asp1052, Glu1087, Asp1107, and Asp1158. Residues 1172-1213 (EKIEPAQEEHEKYHGNVKELVHKFGIPQLVAKQIVNSCDKCQ) form an Integrase-type zinc finger. Residues His1181, His1185, Cys1209, and Cys1212 each coordinate Zn(2+). In terms of domain architecture, Integrase catalytic spans 1222–1373 (QVNADLGTWQ…TPAERLVNMI (152 aa)). Residues Asp1233, Asp1285, and Glu1321 each coordinate Mg(2+). A DNA-binding region (integrase-type) is located at residues 1392–1439 (FQVYYREGRDQLWKGPGELLWKGEGAVIIKVGTEIKVVPRRKAKIIRH).

As to quaternary structure, homotrimer; further assembles as hexamers of trimers. Interacts with gp41 (via C-terminus). Interacts with host CALM1; this interaction induces a conformational change in the Matrix protein, triggering exposure of the myristate group. Interacts with host AP3D1; this interaction allows the polyprotein trafficking to multivesicular bodies during virus assembly. Part of the pre-integration complex (PIC) which is composed of viral genome, matrix protein, Vpr and integrase. Homodimer; the homodimer further multimerizes as homohexamers or homopentamers. Interacts with human PPIA/CYPA. Interacts with human NUP153. Interacts with host PDZD8; this interaction stabilizes the capsid. Interacts with monkey TRIM5; this interaction destabilizes the capsid. In terms of assembly, homodimer, whose active site consists of two apposed aspartic acid residues. As to quaternary structure, heterodimer of p66 RT and p51 RT (RT p66/p51). Heterodimerization of RT is essential for DNA polymerase activity. The overall folding of the subdomains is similar in p66 RT and p51 RT but the spatial arrangements of the subdomains are dramatically different. Homotetramer; may further associate as a homohexadecamer. Part of the pre-integration complex (PIC) which is composed of viral genome, matrix protein, Vpr and integrase. Interacts with human SMARCB1/INI1 and human PSIP1/LEDGF isoform 1. Interacts with human KPNA3; this interaction might play a role in nuclear import of the pre-integration complex. Interacts with human NUP153; this interaction might play a role in nuclear import of the pre-integration complex. Mg(2+) is required as a cofactor. In terms of processing, specific enzymatic cleavages by the viral protease yield mature proteins. The protease is released by autocatalytic cleavage. The polyprotein is cleaved during and after budding, this process is termed maturation. Proteolytic cleavage of p66 RT removes the RNase H domain to yield the p51 RT subunit. Nucleocapsid protein p7 might be further cleaved after virus entry.

It is found in the host cell membrane. It localises to the host endosome. Its subcellular location is the host multivesicular body. The protein localises to the virion membrane. The protein resides in the host nucleus. It is found in the host cytoplasm. It localises to the virion. The enzyme catalyses Endopeptidase for which the P1 residue is preferably hydrophobic.. It carries out the reaction Endohydrolysis of RNA in RNA/DNA hybrids. Three different cleavage modes: 1. sequence-specific internal cleavage of RNA. Human immunodeficiency virus type 1 and Moloney murine leukemia virus enzymes prefer to cleave the RNA strand one nucleotide away from the RNA-DNA junction. 2. RNA 5'-end directed cleavage 13-19 nucleotides from the RNA end. 3. DNA 3'-end directed cleavage 15-20 nucleotides away from the primer terminus.. The catalysed reaction is 3'-end directed exonucleolytic cleavage of viral RNA-DNA hybrid.. It catalyses the reaction DNA(n) + a 2'-deoxyribonucleoside 5'-triphosphate = DNA(n+1) + diphosphate. Protease: The viral protease is inhibited by many synthetic protease inhibitors (PIs), such as amprenavir, atazanavir, indinavir, loprinavir, nelfinavir, ritonavir and saquinavir. Use of protease inhibitors in tritherapy regimens permit more ambitious therapeutic strategies. Reverse transcriptase/ribonuclease H: RT can be inhibited either by nucleoside RT inhibitors (NRTIs) or by non nucleoside RT inhibitors (NNRTIs). NRTIs act as chain terminators, whereas NNRTIs inhibit DNA polymerization by binding a small hydrophobic pocket near the RT active site and inducing an allosteric change in this region. Classical NRTIs are abacavir, adefovir (PMEA), didanosine (ddI), lamivudine (3TC), stavudine (d4T), tenofovir (PMPA), zalcitabine (ddC), and zidovudine (AZT). Classical NNRTIs are atevirdine (BHAP U-87201E), delavirdine, efavirenz (DMP-266), emivirine (I-EBU), and nevirapine (BI-RG-587). The tritherapies used as a basic effective treatment of AIDS associate two NRTIs and one NNRTI. Functionally, mediates, with Gag polyprotein, the essential events in virion assembly, including binding the plasma membrane, making the protein-protein interactions necessary to create spherical particles, recruiting the viral Env proteins, and packaging the genomic RNA via direct interactions with the RNA packaging sequence (Psi). Gag-Pol polyprotein may regulate its own translation, by the binding genomic RNA in the 5'-UTR. At low concentration, the polyprotein would promote translation, whereas at high concentration, the polyprotein would encapsidate genomic RNA and then shut off translation. Targets the polyprotein to the plasma membrane via a multipartite membrane-binding signal, that includes its myristoylated N-terminus. Matrix protein is part of the pre-integration complex. Implicated in the release from host cell mediated by Vpu. Binds to RNA. Its function is as follows. Forms the conical core that encapsulates the genomic RNA-nucleocapsid complex in the virion. Most core are conical, with only 7% tubular. The core is constituted by capsid protein hexamer subunits. The core is disassembled soon after virion entry. Host restriction factors such as TRIM5-alpha or TRIMCyp bind retroviral capsids and cause premature capsid disassembly, leading to blocks in reverse transcription. Capsid restriction by TRIM5 is one of the factors which restricts HIV-1 to the human species. Host PIN1 apparently facilitates the virion uncoating. On the other hand, interactions with PDZD8 or CYPA stabilize the capsid. In terms of biological role, encapsulates and protects viral dimeric unspliced genomic RNA (gRNA). Binds these RNAs through its zinc fingers. Acts as a nucleic acid chaperone which is involved in rearangement of nucleic acid secondary structure during gRNA retrotranscription. Also facilitates template switch leading to recombination. As part of the polyprotein, participates in gRNA dimerization, packaging, tRNA incorporation and virion assembly. Functionally, aspartyl protease that mediates proteolytic cleavages of Gag and Gag-Pol polyproteins during or shortly after the release of the virion from the plasma membrane. Cleavages take place as an ordered, step-wise cascade to yield mature proteins. This process is called maturation. Displays maximal activity during the budding process just prior to particle release from the cell. Also cleaves Nef and Vif, probably concomitantly with viral structural proteins on maturation of virus particles. Hydrolyzes host EIF4GI and PABP1 in order to shut off the capped cellular mRNA translation. The resulting inhibition of cellular protein synthesis serves to ensure maximal viral gene expression and to evade host immune response. Multifunctional enzyme that converts the viral RNA genome into dsDNA in the cytoplasm, shortly after virus entry into the cell. This enzyme displays a DNA polymerase activity that can copy either DNA or RNA templates, and a ribonuclease H (RNase H) activity that cleaves the RNA strand of RNA-DNA heteroduplexes in a partially processive 3' to 5' endonucleasic mode. Conversion of viral genomic RNA into dsDNA requires many steps. A tRNA(3)-Lys binds to the primer-binding site (PBS) situated at the 5'-end of the viral RNA. RT uses the 3' end of the tRNA primer to perform a short round of RNA-dependent minus-strand DNA synthesis. The reading proceeds through the U5 region and ends after the repeated (R) region which is present at both ends of viral RNA. The portion of the RNA-DNA heteroduplex is digested by the RNase H, resulting in a ssDNA product attached to the tRNA primer. This ssDNA/tRNA hybridizes with the identical R region situated at the 3' end of viral RNA. This template exchange, known as minus-strand DNA strong stop transfer, can be either intra- or intermolecular. RT uses the 3' end of this newly synthesized short ssDNA to perform the RNA-dependent minus-strand DNA synthesis of the whole template. RNase H digests the RNA template except for two polypurine tracts (PPTs) situated at the 5'-end and near the center of the genome. It is not clear if both polymerase and RNase H activities are simultaneous. RNase H probably can proceed both in a polymerase-dependent (RNA cut into small fragments by the same RT performing DNA synthesis) and a polymerase-independent mode (cleavage of remaining RNA fragments by free RTs). Secondly, RT performs DNA-directed plus-strand DNA synthesis using the PPTs that have not been removed by RNase H as primers. PPTs and tRNA primers are then removed by RNase H. The 3' and 5' ssDNA PBS regions hybridize to form a circular dsDNA intermediate. Strand displacement synthesis by RT to the PBS and PPT ends produces a blunt ended, linear dsDNA copy of the viral genome that includes long terminal repeats (LTRs) at both ends. Its function is as follows. Catalyzes viral DNA integration into the host chromosome, by performing a series of DNA cutting and joining reactions. This enzyme activity takes place after virion entry into a cell and reverse transcription of the RNA genome in dsDNA. The first step in the integration process is 3' processing. This step requires a complex comprising the viral genome, matrix protein, Vpr and integrase. This complex is called the pre-integration complex (PIC). The integrase protein removes 2 nucleotides from each 3' end of the viral DNA, leaving recessed CA OH's at the 3' ends. In the second step, the PIC enters cell nucleus. This process is mediated through integrase and Vpr proteins, and allows the virus to infect a non dividing cell. This ability to enter the nucleus is specific of lentiviruses, other retroviruses cannot and rely on cell division to access cell chromosomes. In the third step, termed strand transfer, the integrase protein joins the previously processed 3' ends to the 5' ends of strands of target cellular DNA at the site of integration. The 5'-ends are produced by integrase-catalyzed staggered cuts, 5 bp apart. A Y-shaped, gapped, recombination intermediate results, with the 5'-ends of the viral DNA strands and the 3' ends of target DNA strands remaining unjoined, flanking a gap of 5 bp. The last step is viral DNA integration into host chromosome. This involves host DNA repair synthesis in which the 5 bp gaps between the unjoined strands are filled in and then ligated. Since this process occurs at both cuts flanking the HIV genome, a 5 bp duplication of host DNA is produced at the ends of HIV-1 integration. Alternatively, Integrase may catalyze the excision of viral DNA just after strand transfer, this is termed disintegration. This Human immunodeficiency virus type 2 subtype B (isolate D205) (HIV-2) protein is Gag-Pol polyprotein (gag-pol).